A 467-amino-acid polypeptide reads, in one-letter code: Ribosomal protein uS12 methylthiotransferase RimO (467 aa).

Residues 1 to 27 (MTSNPPDLRPDLAPKPTFGTAPRPDQP) are disordered. In terms of domain architecture, MTTase N-terminal spans 27 to 137 (PTLGMVSLGC…VLDAVHAAVP (111 aa)). Residues Cys36, Cys72, Cys101, Cys168, Cys172, and Cys175 each contribute to the [4Fe-4S] cluster site. The region spanning 154 to 397 (LTPRHFSYLK…MEKAQAISEA (244 aa)) is the Radical SAM core domain. In terms of domain architecture, TRAM spans 400-467 (ASKVGQTLQV…GEYDLWGALR (68 aa)).

It belongs to the methylthiotransferase family. RimO subfamily. Requires [4Fe-4S] cluster as cofactor.

It localises to the cytoplasm. It carries out the reaction L-aspartate(89)-[ribosomal protein uS12]-hydrogen + (sulfur carrier)-SH + AH2 + 2 S-adenosyl-L-methionine = 3-methylsulfanyl-L-aspartate(89)-[ribosomal protein uS12]-hydrogen + (sulfur carrier)-H + 5'-deoxyadenosine + L-methionine + A + S-adenosyl-L-homocysteine + 2 H(+). Functionally, catalyzes the methylthiolation of an aspartic acid residue of ribosomal protein uS12. The chain is Ribosomal protein uS12 methylthiotransferase RimO from Ruegeria sp. (strain TM1040) (Silicibacter sp.).